Here is a 99-residue protein sequence, read N- to C-terminus: Fetal and adult testis-expressed transcript protein homolog (99 aa).

Residues 79 to 98 traverse the membrane as a helical segment; sequence AALFTLLVSVCIANLWLWVH.

In terms of assembly, interacts with BIK and RNF183. Interacts with IMMT/MIC60and EMD.

It localises to the mitochondrion. The protein localises to the mitochondrion outer membrane. It is found in the endoplasmic reticulum membrane. Functionally, involved in the regulation of endoplasmic reticulum (ER)-mitochondria coupling. Negatively regulates the ER-mitochondria distance and Ca(2+) transfer from ER to mitochondria possibly implicating it in the regulation of apoptosis. May collaborate with RNF183 to restrain BIK protein levels thus regulating apoptotic signaling. This Mus musculus (Mouse) protein is Fetal and adult testis-expressed transcript protein homolog (Fate1).